The primary structure comprises 169 residues: Peptide methionine sulfoxide reductase MsrA (169 aa).

Cys-10 is an active-site residue.

Belongs to the MsrA Met sulfoxide reductase family.

It catalyses the reaction L-methionyl-[protein] + [thioredoxin]-disulfide + H2O = L-methionyl-(S)-S-oxide-[protein] + [thioredoxin]-dithiol. The catalysed reaction is [thioredoxin]-disulfide + L-methionine + H2O = L-methionine (S)-S-oxide + [thioredoxin]-dithiol. Its function is as follows. Has an important function as a repair enzyme for proteins that have been inactivated by oxidation. Catalyzes the reversible oxidation-reduction of methionine sulfoxide in proteins to methionine. The chain is Peptide methionine sulfoxide reductase MsrA from Streptococcus pyogenes serotype M28 (strain MGAS6180).